The sequence spans 426 residues: Histidine--tRNA ligase (426 aa).

This sequence belongs to the class-II aminoacyl-tRNA synthetase family. Homodimer.

It localises to the cytoplasm. It catalyses the reaction tRNA(His) + L-histidine + ATP = L-histidyl-tRNA(His) + AMP + diphosphate + H(+). The sequence is that of Histidine--tRNA ligase from Streptococcus pyogenes serotype M18 (strain MGAS8232).